The sequence spans 85 residues: UPF0291 protein SPH_1589 (85 aa).

The interval 62 to 85 is disordered; the sequence is TPEKLRQVQREKGLHGRSLDDPNS.

Belongs to the UPF0291 family.

It localises to the cytoplasm. The protein is UPF0291 protein SPH_1589 of Streptococcus pneumoniae (strain Hungary19A-6).